Reading from the N-terminus, the 341-residue chain is Protein RecA, plasmid (341 aa).

Residue 80–87 coordinates ATP; sequence GAESSGKT.

The protein belongs to the RecA family.

The protein resides in the cytoplasm. Can catalyze the hydrolysis of ATP in the presence of single-stranded DNA, the ATP-dependent uptake of single-stranded DNA by duplex DNA, and the ATP-dependent hybridization of homologous single-stranded DNAs. It interacts with LexA causing its activation and leading to its autocatalytic cleavage. The polypeptide is Protein RecA, plasmid (Lactococcus lactis subsp. lactis (Streptococcus lactis)).